Consider the following 284-residue polypeptide: Probable ADP-ribose 1''-phosphate phosphatase YML087W (284 aa).

Residues Asp-23, Gln-55, Asn-80, and Asp-90 each coordinate substrate. In terms of domain architecture, Macro spans Glu-34–Leu-230. Residues Asn-80 and Asp-90 contribute to the active site. Cys-128 and Cys-136 are joined by a disulfide. Residue His-145 is part of the active site. Residues Thr-148 and Thr-195 each coordinate substrate.

As to quaternary structure, homodimer.

The enzyme catalyses ADP-alpha-D-ribose 1''-phosphate + H2O = ADP-D-ribose + phosphate. Highly specific phosphatase involved in the metabolism of ADP-ribose 1''-phosphate (Appr1p) which is produced as a consequence of tRNA splicing. + phosphate. This Saccharomyces cerevisiae (strain ATCC 204508 / S288c) (Baker's yeast) protein is Probable ADP-ribose 1''-phosphate phosphatase YML087W.